Here is an 84-residue protein sequence, read N- to C-terminus: Large ribosomal subunit protein bL31B (84 aa).

Belongs to the bacterial ribosomal protein bL31 family. Type B subfamily. As to quaternary structure, part of the 50S ribosomal subunit.

The protein is Large ribosomal subunit protein bL31B of Rhodococcus opacus (strain B4).